The sequence spans 312 residues: Aquaporin Lacbi1:391485 (312 aa).

At Met1 to Glu50 the chain is on the cytoplasmic side. The helical transmembrane segment at Phe51–Ser71 threads the bilayer. Residues Ala72–Cys89 are Extracellular-facing. The helical transmembrane segment at Gly90 to Ile110 threads the bilayer. An NPA 1 motif is present at residues Asn111–Ala113. Over Asn111–Lys128 the chain is Cytoplasmic. Residues Val129–Val149 traverse the membrane as a helical segment. The Extracellular portion of the chain corresponds to Asn150 to Asn183. The N-linked (GlcNAc...) asparagine glycan is linked to Asn183. The helical transmembrane segment at Val184–Met204 threads the bilayer. Over Asn205 to Pro213 the chain is Cytoplasmic. A helical membrane pass occupies residues Ala214–Met234. Residues Glu235–Gln267 lie on the Extracellular side of the membrane. Positions Asn241–Ala243 match the NPA 2 motif. A helical transmembrane segment spans residues Tyr268–Tyr288. At Asp289–Ala312 the chain is on the cytoplasmic side.

This sequence belongs to the MIP/aquaporin (TC 1.A.8) family.

Its subcellular location is the membrane. The catalysed reaction is H2O(in) = H2O(out). It catalyses the reaction glycerol(in) = glycerol(out). It carries out the reaction NH4(+)(in) = NH4(+)(out). Water channel required to facilitate the transport of water across membranes. In addition to water, also shows strong glycerol and ammonium transport activities. May be involved in fungal nitrogen (ammonium) support of the plant host in symbiosis. Glycerol accumulation has never been observed in ectomycorrhizal (ECM) fungi, therefore, glycerol permeability of Lacbi1:391485 might be a relict of the affiliation of the protein to the group of aquaglyceroporins, and other osmotic active compounds (e.g. trehalose or mannitol) may have taken over glycerol function in ECM fungi. The sequence is that of Aquaporin Lacbi1:391485 from Laccaria bicolor (strain S238N-H82 / ATCC MYA-4686) (Bicoloured deceiver).